A 318-amino-acid chain; its full sequence is Thymidylate synthase (318 aa).

DUMP is bound by residues Arg-25 and 180-181; that span reads RR. The Nucleophile role is filled by Cys-200. DUMP is bound by residues 220-223, Asn-231, and 261-263; these read RSGD and HIY. Residue Asp-223 coordinates (6R)-5,10-methylene-5,6,7,8-tetrahydrofolate. Ala-317 contributes to the (6R)-5,10-methylene-5,6,7,8-tetrahydrofolate binding site.

This sequence belongs to the thymidylate synthase family. Bacterial-type ThyA subfamily. In terms of assembly, homodimer.

Its subcellular location is the cytoplasm. It carries out the reaction dUMP + (6R)-5,10-methylene-5,6,7,8-tetrahydrofolate = 7,8-dihydrofolate + dTMP. Its pathway is pyrimidine metabolism; dTTP biosynthesis. Catalyzes the reductive methylation of 2'-deoxyuridine-5'-monophosphate (dUMP) to 2'-deoxythymidine-5'-monophosphate (dTMP) while utilizing 5,10-methylenetetrahydrofolate (mTHF) as the methyl donor and reductant in the reaction, yielding dihydrofolate (DHF) as a by-product. This enzymatic reaction provides an intracellular de novo source of dTMP, an essential precursor for DNA biosynthesis. This Bacillus cereus (strain ATCC 10987 / NRS 248) protein is Thymidylate synthase.